The sequence spans 297 residues: Large ribosomal subunit protein uL10 (297 aa).

The protein belongs to the universal ribosomal protein uL10 family. In terms of assembly, part of the 50S ribosomal subunit. Forms part of the ribosomal stalk which helps the ribosome interact with GTP-bound translation factors. Forms a heptameric L10(L12)2(L12)2(L12)2 complex, where L10 forms an elongated spine to which the L12 dimers bind in a sequential fashion.

Functionally, forms part of the ribosomal stalk, playing a central role in the interaction of the ribosome with GTP-bound translation factors. The chain is Large ribosomal subunit protein uL10 from Methanococcus voltae.